The chain runs to 973 residues: Probable outer membrane protein pmp13 (973 aa).

Positions 1 to 24 are cleaved as a signal peptide; it reads MKTSIRKFLISTTLAPCFASTAFT. Over residues 284–293 the composition is skewed to polar residues; the sequence is QNNTASPQNS. The segment at 284–303 is disordered; the sequence is QNNTASPQNSLPAPTPPPTP. The 283-residue stretch at 691–973 folds into the Autotransporter domain; the sequence is EDVPGKQLSI…TLDIGSKLRF (283 aa).

It belongs to the PMP outer membrane protein family.

Its subcellular location is the secreted. It is found in the cell wall. The protein localises to the cell outer membrane. In Chlamydia pneumoniae (Chlamydophila pneumoniae), this protein is Probable outer membrane protein pmp13 (pmp13).